A 505-amino-acid polypeptide reads, in one-letter code: Trans-cinnamate 4-monooxygenase (505 aa).

The helical transmembrane segment at 3–23 (LLLLEKTLLGLFAAIIVASIV) threads the bilayer. (E)-cinnamate contacts are provided by residues 213–218 (RSRLAQ) and Ala306. Position 447 (Cys447) interacts with heme.

Belongs to the cytochrome P450 family. Heme serves as cofactor.

The protein localises to the membrane. The catalysed reaction is (E)-cinnamate + reduced [NADPH--hemoprotein reductase] + O2 = (E)-4-coumarate + oxidized [NADPH--hemoprotein reductase] + H2O + H(+). It participates in phenylpropanoid metabolism; trans-4-coumarate biosynthesis; trans-4-coumarate from trans-cinnamate: step 1/1. Catalyzes the first oxidative step of the phenylpropanoid pathway in higher plants by transforming trans-cinnamate into p-coumarate. The compounds formed by this pathway are essential components for lignification, pollination, and defense against ultraviolet light, predators and pathogens. This chain is Trans-cinnamate 4-monooxygenase (CYP73A4), found in Catharanthus roseus (Madagascar periwinkle).